A 382-amino-acid chain; its full sequence is Gap junction alpha-1 protein (382 aa).

The Cytoplasmic segment spans residues Gly-2–Lys-23. Ser-5 is modified (phosphoserine). The helical transmembrane segment at Val-24 to Ala-44 threads the bilayer. Residues Trp-45–Arg-76 lie on the Extracellular side of the membrane. Cystine bridges form between Cys-54–Cys-192 and Cys-187–Cys-198. Residues Phe-77–Phe-97 traverse the membrane as a helical segment. The Cytoplasmic segment spans residues Tyr-98–Tyr-155. Lys-144 is covalently cross-linked (Glycyl lysine isopeptide (Lys-Gly) (interchain with G-Cter in SUMO)). A helical transmembrane segment spans residues Ile-156–Ile-176. At Tyr-177–Thr-207 the chain is on the extracellular side. A helical membrane pass occupies residues Ile-208–Leu-228. Residues Phe-229 to Ile-382 are Cytoplasmic-facing. A Glycyl lysine isopeptide (Lys-Gly) (interchain with G-Cter in SUMO) cross-link involves residue Lys-237. An interaction with NOV region spans residues Ser-244 to Ile-382. Tyr-247 is modified (phosphotyrosine). Phosphoserine occurs at positions 255, 257, and 262. An interaction with UBQLN4 region spans residues Glu-264 to Ile-382. S-nitrosocysteine is present on Cys-271. Thr-275 carries the phosphothreonine modification. A phosphoserine mark is found at Ser-306 and Ser-314. Over residues Gln-317–Ala-332 the composition is skewed to polar residues. Residues Gln-317 to Ile-382 form a disordered region. At Ser-325 the chain carries Phosphoserine; by CK1. Thr-326 carries the phosphothreonine modification. Phosphoserine; by CK1 is present on residues Ser-328 and Ser-330. 2 positions are modified to phosphoserine: Ser-344 and Ser-365. Over residues Arg-362–Arg-374 the composition is skewed to low complexity. A Phosphoserine; by PKC/PRKCG and PKC/PRKCD modification is found at Ser-368. Ser-369 and Ser-373 each carry phosphoserine.

This sequence belongs to the connexin family. Alpha-type (group II) subfamily. A connexon is composed of a hexamer of connexins. Interacts with SGSM3. Interacts with RIC1/CIP150. Interacts with CNST and CSNK1D. Interacts (via C-terminus) with TJP1. Interacts (via C-terminus) with SRC (via SH3 domain). Interacts (not ubiquitinated) with UBQLN4 (via UBA domain). Interacts with NOV. Interacts with TMEM65. Interacts with ANK3/ANKG and PKP2. Post-translationally, phosphorylation at Ser-325, Ser-328 and Ser-330 by CK1 modulates gap junction assembly. Phosphorylated at Ser-368 by PRKCG; phosphorylation induces disassembly of gap junction plaques and inhibition of gap junction activity. Phosphorylation at Ser-368 by PRKCD triggers its internalization into small vesicles leading to proteasome-mediated degradation. Sumoylated with SUMO1, SUMO2 and SUMO3, which may regulate the level of functional Cx43 gap junctions at the plasma membrane. May be desumoylated by SENP1 or SENP2. In terms of processing, S-nitrosylation at Cys-271 is enriched at the muscle endothelial gap junction in arteries, it augments channel permeability and may regulate of smooth muscle cell to endothelial cell communication. Post-translationally, acetylated in the developing cortex; leading to delocalization from the cell membrane.

It localises to the cell membrane. The protein localises to the cell junction. The protein resides in the gap junction. Its subcellular location is the endoplasmic reticulum. Functionally, gap junction protein that acts as a regulator of bladder capacity. A gap junction consists of a cluster of closely packed pairs of transmembrane channels, the connexons, through which materials of low MW diffuse from one cell to a neighboring cell. May play a critical role in the physiology of hearing by participating in the recycling of potassium to the cochlear endolymph. Negative regulator of bladder functional capacity: acts by enhancing intercellular electrical and chemical transmission, thus sensitizing bladder muscles to cholinergic neural stimuli and causing them to contract. May play a role in cell growth inhibition through the regulation of NOV expression and localization. Plays an essential role in gap junction communication in the ventricles. This Canis lupus familiaris (Dog) protein is Gap junction alpha-1 protein (GJA1).